Reading from the N-terminus, the 417-residue chain is GPI mannosyltransferase 2 (417 aa).

9 helical membrane passes run 10 to 30, 104 to 124, 142 to 162, 167 to 187, 206 to 226, 239 to 259, 312 to 332, 344 to 364, and 394 to 414; these read FLII…LVWL, IVLK…WIVY, LALT…LISV, IAFT…SFDV, FCFA…LFYV, ITSI…FVYF, IPNF…ITYF, YIWI…VQII, and YYVM…ACFL.

This sequence belongs to the PIGV family.

It localises to the endoplasmic reticulum membrane. The protein operates within glycolipid biosynthesis; glycosylphosphatidylinositol-anchor biosynthesis. Mannosyltransferase involved in glycosylphosphatidylinositol-anchor biosynthesis. Transfers the second mannose to the glycosylphosphatidylinositol during GPI precursor assembly. The polypeptide is GPI mannosyltransferase 2 (GPI18) (Kluyveromyces lactis (strain ATCC 8585 / CBS 2359 / DSM 70799 / NBRC 1267 / NRRL Y-1140 / WM37) (Yeast)).